The following is a 333-amino-acid chain: MKIAIDGMGGDNAPVAVIDGAIQALKAYDDIQLYITGPEEVLNIELAKYTYPKEKVIVVDAKEVISPNEHPVMALRKKKNSSIVKALNLVKEGICDAVVSGGSTGAFLAGCTLIIGRIKGIERPALAPIMPGRRGKFMIVDVGANVDCKPSFLVQFAKMGKIYYQKVFNVKNPTIGLINIGEEEEKGNELTKAAFKLLKEESSINFKGNIEPREIPTGDTNILVSDGFVGNTALKMYEGSASSILGIIKDEVLKSSIISKIGVVLLKPVLKNIMKKFDYKEYGGAPFLGVDGICIKAHGSSDARAFKNSIKQTKIFYDNNVLKDIRNEFSSEN.

Belongs to the PlsX family. In terms of assembly, homodimer. Probably interacts with PlsY.

The protein resides in the cytoplasm. It carries out the reaction a fatty acyl-[ACP] + phosphate = an acyl phosphate + holo-[ACP]. Its pathway is lipid metabolism; phospholipid metabolism. Catalyzes the reversible formation of acyl-phosphate (acyl-PO(4)) from acyl-[acyl-carrier-protein] (acyl-ACP). This enzyme utilizes acyl-ACP as fatty acyl donor, but not acyl-CoA. This is Phosphate acyltransferase from Clostridium beijerinckii (strain ATCC 51743 / NCIMB 8052) (Clostridium acetobutylicum).